The chain runs to 1026 residues: MRFFALFIYRPVATILIAAAITLCGILGFRLLPVAPLPQVDFPVIMVSASLPGASPETMASSVATPLERSLGRIAGVNEMTSSSSLGSTRIILEFNFDRDINGAARDVQAAINAAQSLLPGGMPSRPTYRKANPSDAPIMILTLTSESWSQGKLYDFASTQLAQTIAQIDGVGDIDVGGSSLPAVRVGLNPQALFNQGVSLDEVREAIDSANVRRPQGAIEDSVHRWQIQTNDELKTAAEYQPLIIHYNNGAAVRLGDVASVTDSVQDVRNAGMTNAKPAILLMIRKLPEANIIQTVDGIRAKLPELRAMIPAAIDLQIAQDRSPTIRASLQEVEETLAISVALVILVVFLFLRSGRATLIPAVAVPVSLIGTFAAMYLCGFSLNNLSLMALTIATGFVVDDAIVVLENIARHLEAGMKPLQAALQGTREVGFTVISMSLSLVAVFLPLLLMGGLPGRLLREFAVTLSVAIGISLVVSLTLTPMMCGWMLKSSKPRTQPRKRGVGRLLVALQQGYGTSLKWVLNHTRLVGVVFLGTVALNIWLYIAIPKTFFPEQDTGVLMGGIQADQSISFQAMRGKLQDFMKIIRDDPAVNNVTGFTGGSRVNSGMMFITLKPRGERKETAQQIIDRLRVKLAKEPGARLFLMAVQDIRVGGRQANASYQYTLLSDSLAALREWEPKIRKALSALPQLADVNSDQQDNGAEMNLIYDRDTMSRLGIDVQAANSLLNNAFGQRQISTIYQPMNQYKVVMEVDPRYSQDISALEKMFVINRDGKAIPLSYFAQWRPANAPLSVNHQGLSAASTIAFNLPTGTSLSQATEAINRTMTQLGVPSTVRGSFSGTAQVFQQTMNSQLILIVAAIATVYIVLGILYESYVHPLTILSTLPSAGVGALLALELFNAPFSLIALIGIMLLIGIVKKNAIMMVDFALEAQRSGGLTPAQAIFQACLLRFRPIMMTTLAALFGALPLVLSGGDGSELRQPLGITIVGGLVMSQLLTLYTTPVVYLFFDRLRLRFSRKNSKPVVEI.

11 helical membrane-spanning segments follow: residues 15 to 35 (ILIA…LPVA), 333 to 353 (EVEE…FLFL), 360 to 380 (LIPA…MYLC), 387 to 407 (LSLM…IVVL), 431 to 451 (VGFT…PLLL), 463 to 483 (FAVT…TLTP), 528 to 548 (LVGV…IAIP), 853 to 873 (LILI…LYES), 897 to 917 (LFNA…IGIV), 953 to 973 (PIMM…LSGG), and 984 to 1004 (ITIV…TPVV).

Belongs to the resistance-nodulation-cell division (RND) (TC 2.A.6) family. MdtC subfamily. In terms of assembly, part of a tripartite efflux system composed of MdtA, MdtB and MdtC. MdtC forms a heteromultimer with MdtB.

Its subcellular location is the cell inner membrane. This is Multidrug resistance protein MdtC from Salmonella gallinarum (strain 287/91 / NCTC 13346).